We begin with the raw amino-acid sequence, 299 residues long: Cysteine synthase B (299 aa).

An N6-(pyridoxal phosphate)lysine modification is found at Lys40. Pyridoxal 5'-phosphate contacts are provided by residues Asn70, 174 to 178, and Ser261; that span reads GTGGT.

It belongs to the cysteine synthase/cystathionine beta-synthase family. The cofactor is pyridoxal 5'-phosphate.

It catalyses the reaction O-acetyl-L-serine + hydrogen sulfide = L-cysteine + acetate. The protein operates within amino-acid biosynthesis; L-cysteine biosynthesis; L-cysteine from L-serine: step 2/2. The sequence is that of Cysteine synthase B (cysM) from Campylobacter jejuni subsp. jejuni serotype O:2 (strain ATCC 700819 / NCTC 11168).